Reading from the N-terminus, the 366-residue chain is Agamous-like MADS-box protein AGL36 (366 aa).

An MADS-box domain is found at 1–59; sequence MKKVKLSLIANERSRKTSFIKRKDGIFKKLHELSTLCGVQACALIYSPFIPVPESWPSR. Positions 86 to 115 form a coiled coil; that stretch reads TYLMERITKAKEQLKNLAAENRELQVRRFM.

In terms of assembly, interacts with AGL62.

It is found in the nucleus. Functionally, probable transcription factor. The protein is Agamous-like MADS-box protein AGL36 (AGL36) of Arabidopsis thaliana (Mouse-ear cress).